Consider the following 202-residue polypeptide: Thymidylate kinase (202 aa).

Position 13 to 20 (13 to 20 (GTDGAGKS)) interacts with ATP.

The protein belongs to the thymidylate kinase family.

It carries out the reaction dTMP + ATP = dTDP + ADP. In terms of biological role, phosphorylation of dTMP to form dTDP in both de novo and salvage pathways of dTTP synthesis. This chain is Thymidylate kinase, found in Desulfotalea psychrophila (strain LSv54 / DSM 12343).